Here is a 397-residue protein sequence, read N- to C-terminus: Gamma tubulin complex adapter mto2 (397 aa).

Positions M1–A13 are enriched in basic and acidic residues. Disordered regions lie at residues M1–G44, Y269–S298, and R346–P397. Composition is skewed to polar residues over residues A22–R37, Y269–A281, R352–S369, and S382–P397. A phosphoserine mark is found at S366 and S396.

Interacts with mto1; the interaction is direct and required for efficient binding to the gamma-tubulin complex. Interacts with gamma tubulin complex subunits alp4, alp6 and gtb1.

The protein localises to the cytoplasm. The protein resides in the cytoskeleton. It localises to the microtubule organizing center. Its subcellular location is the spindle pole body. Acts together with mto1 to promote nucleation of at least a subset of cytoplasmic microtubules, by recruiting the gamma-tubulin complex to the interphase microtubule organizing center (iMTOC) and to the equatorial MTOC (eMTOC) during anaphase. Does not appear to be required for cytoplasmic astral microtubule nucleation from the spindle pole body (SPB). Required to establish the eMTOC, and thereby to tether the cytokinetic actin ring. This is Gamma tubulin complex adapter mto2 from Schizosaccharomyces pombe (strain 972 / ATCC 24843) (Fission yeast).